The sequence spans 349 residues: Homoserine O-succinyltransferase (349 aa).

C146 acts as the Acyl-thioester intermediate in catalysis. Substrate is bound by residues K167 and S196. Catalysis depends on H239, which acts as the Proton acceptor. E241 is a catalytic residue. R253 is a substrate binding site.

This sequence belongs to the MetA family.

Its subcellular location is the cytoplasm. The catalysed reaction is L-homoserine + succinyl-CoA = O-succinyl-L-homoserine + CoA. Its pathway is amino-acid biosynthesis; L-methionine biosynthesis via de novo pathway; O-succinyl-L-homoserine from L-homoserine: step 1/1. In terms of biological role, transfers a succinyl group from succinyl-CoA to L-homoserine, forming succinyl-L-homoserine. In vitro, can also use glutaryl-CoA as acyl donor. The polypeptide is Homoserine O-succinyltransferase (Thiobacillus denitrificans (strain ATCC 25259 / T1)).